We begin with the raw amino-acid sequence, 584 residues long: Interferon regulatory factor 2-binding protein 1 (584 aa).

Residues 59-120 (HVLPEGRSPG…RYDRATSSSR (62 aa)) are disordered. At Ser-66 the chain carries Phosphoserine. Positions 82–100 (STGSQGSQLPPPQAQAQPS) are enriched in low complexity. Phosphoserine is present on Ser-125. Arg-177 is subject to Omega-N-methylarginine. Phosphoserine is present on Ser-186. A coiled-coil region spans residues 197 to 217 (EKEKQQRNADCLAELNEAMRG). Lys-227 is covalently cross-linked (Glycyl lysine isopeptide (Lys-Gly) (interchain with G-Cter in SUMO2)). Disordered stretches follow at residues 346-421 (PAEA…GVPS) and 433-495 (LGHS…GTGA). Over residues 354-369 (YPEPAPAALCGPPPRA) the composition is skewed to pro residues. 4 positions are modified to phosphoserine: Ser-371, Ser-384, Ser-421, and Ser-436. Lys-438 participates in a covalent cross-link: Glycyl lysine isopeptide (Lys-Gly) (interchain with G-Cter in SUMO2). The segment covering 449-458 (AGGASPAASS) has biased composition (low complexity). Phosphoserine occurs at positions 453 and 457. Residues 503-550 (CTLCRERLEDTHFVQCPSVPGHKFCFPCSREFIKAQGPAGEVYCPSGD) form an RING-type; degenerate zinc finger. Residues 503–550 (CTLCRERLEDTHFVQCPSVPGHKFCFPCSREFIKAQGPAGEVYCPSGD) form a cys-rich region.

Belongs to the IRF2BP family. In terms of assembly, interacts with IRF2. Part of a corepressor complex containing IRF2 and IRF2BP2. Interacts with JDP2.

Its subcellular location is the nucleus. It carries out the reaction S-ubiquitinyl-[E2 ubiquitin-conjugating enzyme]-L-cysteine + [acceptor protein]-L-lysine = [E2 ubiquitin-conjugating enzyme]-L-cysteine + N(6)-ubiquitinyl-[acceptor protein]-L-lysine.. Functionally, acts as a transcriptional corepressor in a IRF2-dependent manner; this repression is not mediated by histone deacetylase activities. May act as an E3 ligase towards JDP2, enhancing its polyubiquitination. Represses ATF2-dependent transcriptional activation. This Mus musculus (Mouse) protein is Interferon regulatory factor 2-binding protein 1 (Irf2bp1).